Here is a 1087-residue protein sequence, read N- to C-terminus: Error-prone DNA polymerase 3 (1087 aa).

Positions 1040-1064 (AGRGDEFAHGSPGSSDTRDKSKPVV) are disordered.

Belongs to the DNA polymerase type-C family. DnaE2 subfamily.

Its subcellular location is the cytoplasm. The enzyme catalyses DNA(n) + a 2'-deoxyribonucleoside 5'-triphosphate = DNA(n+1) + diphosphate. In terms of biological role, DNA polymerase involved in damage-induced mutagenesis and translesion synthesis (TLS). It is not the major replicative DNA polymerase. The polypeptide is Error-prone DNA polymerase 3 (Agrobacterium fabrum (strain C58 / ATCC 33970) (Agrobacterium tumefaciens (strain C58))).